Consider the following 316-residue polypeptide: MDQNNSLPPYAQGLASPQGAMTPGIPIFSPMMPYGTGLTPQPIQNTNSLSILEEQQRQQQQQQQQQQQQQAVATAAASVQQSTSQQPTQGASGQTPQLFHSQTLTTAPLPGTTPLYPSPMTPMTPITPATPASESSGIVPQLQNIVSTVNLGCKLDLKTIALRARNAEYNPKRFAAVIMRIREPRTTALIFSSGKMVCTGAKSEEQSRLAARKYARVVQKLGFPAKFLDFKIQNMVGSCDVKFPIRLEGLVLTHQQFSSYEPELFPGLIYRMIKPRIVLLIFVSGKVVLTGAKVRAEIYEAFENIYPILKGFRKTT.

Disordered regions lie at residues 1–21 (MDQNNSLPPYAQGLASPQGAM) and 104–135 (LTTAPLPGTTPLYPSPMTPMTPITPATPASES). Composition is skewed to low complexity over residues 104-115 (LTTAPLPGTTPL) and 123-133 (MTPITPATPAS). Tandem repeats lie at residues 142-218 (LQNI…ARVV) and 232-309 (IQNM…YPIL). Positions 144, 180, 195, 234, and 271 each coordinate DNA.

This sequence belongs to the TBP family. Binds DNA as monomer. Belongs to the TFIID complex together with the TBP-associated factors (TAFs). Part of a TFIID-containing RNA polymerase II pre-initiation complex that is composed of TBP and at least GTF2A1, GTF2A2, GTF2E1, GTF2E2, GTF2F1, GTF2H2, GTF2H3, GTF2H4, GTF2H5, GTF2B, TCEA1, ERCC2, ERCC3, TAF1, TAF2, TAF3, TAF4, TAF5, TAF6, TAF7, TAF8, TAF9, TAF10, TAF11, TAF12 and TAF13. Component of the transcription factor SL1/TIF-IB complex, composed of TBP and at least TAF1A, TAF1B, TAF1C and TAF1D. Association of TBP to form either TFIID or SL1/TIF-IB appears to be mutually exclusive. Interacts with TAF1A, TAF1B and TAF1C. Interacts with TFIIB, NCOA6, DRAP1, DR1 and ELF3. Interacts with SPIB, SNAPC1, SNAPC2 and SNAPC4. Interacts with UTF1. Interacts with BRF2; this interaction promotes recruitment of BRF2 to TATA box-containing promoters. Interacts with UBTF. Interacts with GPBP1. Interacts with CITED2. Interacts with ATF7IP. Interacts with LLPH. Interacts with HSF1 (via transactivation domain). Interacts with GTF2B (via C-terminus); this interaction with promoter-bound TBP guides RNA polymerase II into the pre-initiation complex (PIC). Interacts with PAX5. Interacts with MSX1; the interaction may inhibit MSX1 autoinactivation. Interacts with MSX3. As to expression, ubiquitously expressed.

It localises to the nucleus. General transcription factor that functions at the core of the DNA-binding multiprotein factor TFIID. Binding of TFIID to the TATA box is the initial transcriptional step of the pre-initiation complex (PIC), playing a role in the activation of eukaryotic genes transcribed by RNA polymerase II. Component of a BRF2-containing transcription factor complex that regulates transcription mediated by RNA polymerase III. Component of the transcription factor SL1/TIF-IB complex, which is involved in the assembly of the PIC (pre-initiation complex) during RNA polymerase I-dependent transcription. The rate of PIC formation probably is primarily dependent on the rate of association of SL1 with the rDNA promoter. SL1 is involved in stabilization of nucleolar transcription factor 1/UBTF on rDNA. This chain is TATA-box-binding protein (Tbp), found in Mus musculus (Mouse).